We begin with the raw amino-acid sequence, 371 residues long: Ribosomal RNA small subunit methyltransferase H (371 aa).

Residues 43-45 (GGH), D62, L96, D110, and Q117 each bind S-adenosyl-L-methionine. The disordered stretch occupies residues 315–371 (AAERLDPTQQQRQRTDRERYRRQVRAMHQPGTGSAVRRPVSGDDGTGTDEEGEGHDD). Residues 360-371 (TGTDEEGEGHDD) are compositionally biased toward acidic residues.

Belongs to the methyltransferase superfamily. RsmH family.

The protein resides in the cytoplasm. The enzyme catalyses cytidine(1402) in 16S rRNA + S-adenosyl-L-methionine = N(4)-methylcytidine(1402) in 16S rRNA + S-adenosyl-L-homocysteine + H(+). In terms of biological role, specifically methylates the N4 position of cytidine in position 1402 (C1402) of 16S rRNA. The protein is Ribosomal RNA small subunit methyltransferase H of Salinispora tropica (strain ATCC BAA-916 / DSM 44818 / JCM 13857 / NBRC 105044 / CNB-440).